A 1754-amino-acid chain; its full sequence is MQLKYLRTLLEGQEQIQRIAGLAWSPNQQRLAIATADRHILLYDDAGERRDKFSTKPANPANGKNSYVIRGLAFSPDSTKLAVGQSDSIVYVYKLGESWNDKKVICNKFPQASAVTALIWLTSGSIIAGLEDGKVRALHSKSNKSQSLYGGDSICISLAANTKGTGFLSGHNDGTIIRYFMTDEATEPLGRVVQHPVPPFALAWPQGGFCAGGCDQRIVFYDSMGRQLRTFDHSRTEGEREFTVAACSPNGQAVAFGSFDRIRIFAWSPRQGAWSESATKEVACLYTLSSLLWRRDGARLALGSVSGAVLLFESVLRRTVWQDKFELIFVAPSQLLVRSLTEPSQALTIESQLGLEIDDVRIMGRDNYLVARTEESLILCDLTRNLSSEVPWTASGHHERFYFENPTVCLIFNVGELSLVEYGENSILGSVRTEFVNPHVISVRLNERGNAKENKKLAFLLDAKTICVVDLISRMTSGQISHETKIDWLELSETAHKLLFRDKKLRLILVDNYTGKKQTLLSNISFVQWVPQSDVVVAQSNSNLAIWYNIDLPEHVTMQSVRGEAIEVLRENGRTVVRSQDGPSEHNYQLDEGLVEFGTAVNDSDFGRAVHFLESLGDKPAAKAMWHNLALIALEDGNLRVAQRCYAALGNVSKAYYLAGMIQQADEFEESSGSPGILCPEVRAKLALLGSDLRTAERIYLEQGDIESALKMYQQLGMWDEAVALAERRGYNRIAELKQQHMDYLLSSEQQEKAGQVLEEQGDLQQAMSLYMKANKPARAARLALKTPHILQDEQVMLQVTEGLVRSELYELAGDIAHRLSRPEAALALYRKGGAYARALEIGRVVAPQEVTALEEEWGDWLVSRKQLDASINHYIEAGATQKALEAAVGAKQWRKAVQIAKVLDEPELIQRYAVDLAKHLAFAGDLDGAEDMLVRANLHKDAIELLNRHGKWERAYLIGEKHLKAEQVRELFVQLAGTLEEQGKFRDAEKVLIAVNEPDLAIAMYKRRELYDSMIRLVERYHKDLLDSTHLHLARQLESRGKLKNAEMHFVASGDWKSAVHMYCSSGRWEDGYRVAKLKGTEGASQQVAYMWAKSMPTEGAVRLLSKLGLLDTAVGFACDSGQFEFAMELCKFAGKPTDEVHLKIAMSLEDEGKFEAAEAEFLKANKPREAILMYQHAGDWQAALNVAENHLPDAVGEVLIGQASAALETSNYKDYEALLLRAHRPDLIIEHYKQESLYEDALRIAEEHYPSALNDLRRLQAQLQRGQAQAQAGEDAASISRSYLQKAAEFAKKEQFRKAAECLMQIDSSNAEDASTLERALLRAAEICNQFLEGQDAQELAQSLGPRLLAIKQIGPAAQLYLAADMPKQAVDVFIKTEQWSKARRLAKEIDPDLQLLAYVEQQQKASLKHEGNIEQLADIDIVSALDLLAEHGEWQRCLEKAKGLNPALLQKYVAVYAAQLIREGNCTTALGLYLSYGAPPIEAHFNIYTRIALDCLALREEQTERGTTWRQLRDFLFRLLQSLKATPAQSQTKFAASMEQFLLIAHYYATRAACKEVQALQPVALRLSLALLRHTDLLPVDKGFYEAGMDLRQAGREAEAFVMLNHYLDVCEAIEEGSGQLVDHSDLASTDFPSSVPLPEDIHLKNDPSLHEEVREWVLAVSMDQQVDQQLPTDDRGLYESSLGPNDLPCMLSGFPVRGRQPVTFQGSSNQVNRDVWSKFSVALKMSPGSGIADIISFTEKWQGAANYVMH.

WD repeat units lie at residues E14 to F53, K64 to K103, P110 to Y149, G151 to G190, Q194 to D232, A283 to Q322, and T519 to T557. TPR repeat units follow at residues K623–Y656, G690–V723, S748–A781, S807–L840, T852–L885, R1041–Y1074, D1140–A1166, N1167–E1199, T1211–H1250, S1282–D1315, and F1698–S1733.

This sequence belongs to the IFT172 family.

Its subcellular location is the cell projection. It localises to the cilium. In terms of biological role, required for the maintenance and formation of cilia. This Drosophila melanogaster (Fruit fly) protein is Intraflagellar transport protein 172 homolog.